A 510-amino-acid polypeptide reads, in one-letter code: Cytochrome P450 monooxygenase macH (510 aa).

The chain crosses the membrane as a helical span at residues 7 to 29 (LPVSLWLIAAGTFAVYHAIRAVY). Heme is bound at residue cysteine 454.

The protein belongs to the cytochrome P450 family. The cofactor is heme.

It localises to the membrane. Its pathway is secondary metabolite biosynthesis; terpenoid biosynthesis. In terms of biological role, cytochrome P450 monooxygenase; part of the gene cluster that mediates the biosynthesis of macrophorins, isoprenoid epoxycyclohexenones containing cyclized drimane moieties. The first step of the pathway is the synthesis of 6-methylsalicylic acid (6-MSA) by the polyketide synthase macA. 6-MSA is then converted to m-cresol by the decarboxylase macB. The cytochrome P450 monooxygenase macC then catalyzes the oxidation of m-cresol to toluquinol. Epoxidation of toluquinol is then performed by the short chain dehydrogenase macD, with the help of macE, and a further prenylation by macG leads to 7-deacetoxyyanuthone A. The next step is the hydroxylation of C-22 of 7-deacetoxyyanuthone A by the cytochrome P450 monooxygenase macH to yield 22-deacetylyanuthone A. O-Mevalon transferase macI then attaches mevalon to the hydroxyl group of 22-deacetylyanuthone A to produce yanuthone E. The terpene cyclase macJ catalyzes the cyclization of 22-deacetylyanuthone A to macrophorin A. MacJ is also able to catalyze cyclization of yanuthone E and 7-deacetoxyyanuthone A to their corresponding macrophorins. The macJ products can be further modified by macH and macJ, as well as by the FAD-dependent monooxygenase macF, to produce additional macrophorins, including 4'-oxomacrophorin A, 4'-oxomacrophorin D and 4'-oxomacrophorin E. The sequence is that of Cytochrome P450 monooxygenase macH from Penicillium terrestre.